The sequence spans 207 residues: Large ribosomal subunit protein uL4 (207 aa).

Residues 49-78 are disordered; sequence HAVKNRSAVSGGGRKPWRQKGTGRARQGSI.

The protein belongs to the universal ribosomal protein uL4 family. Part of the 50S ribosomal subunit.

Functionally, one of the primary rRNA binding proteins, this protein initially binds near the 5'-end of the 23S rRNA. It is important during the early stages of 50S assembly. It makes multiple contacts with different domains of the 23S rRNA in the assembled 50S subunit and ribosome. Forms part of the polypeptide exit tunnel. In Streptococcus pyogenes serotype M49 (strain NZ131), this protein is Large ribosomal subunit protein uL4.